Here is a 222-residue protein sequence, read N- to C-terminus: RING finger protein 141 (222 aa).

The RING-type zinc-finger motif lies at 147–184; that stretch reads CCICMDGKADLILPCAHSFCQKCIDKWSGQSRNCPVCR.

This Danio rerio (Zebrafish) protein is RING finger protein 141 (rnf141).